We begin with the raw amino-acid sequence, 407 residues long: Zinc finger protein 174 (407 aa).

A disordered region spans residues 1-20 (MAAKMEITLSSNTEASSKQE). K26 is covalently cross-linked (Glycyl lysine isopeptide (Lys-Gly) (interchain with G-Cter in SUMO2)). Positions 59-124 (GPQEALSQLR…KEIVTLVEDF (66 aa)) constitute an SCAN box domain. Residues 150–270 (GSQLGEQELP…RRQVSSPNAQ (121 aa)) are disordered. K204 is covalently cross-linked (Glycyl lysine isopeptide (Lys-Gly) (interchain with G-Cter in SUMO2)). Residues 211-221 (PRMRSDNKENP) show a composition bias toward basic and acidic residues. Residues K230 and K271 each participate in a glycyl lysine isopeptide (Lys-Gly) (interchain with G-Cter in SUMO2) cross-link. 3 consecutive C2H2-type zinc fingers follow at residues 326–348 (YKCD…KRVH), 354–376 (YTCG…QRIH), and 382–405 (YQCG…RLHH).

It belongs to the krueppel C2H2-type zinc-finger protein family. As to quaternary structure, homodimer. In terms of tissue distribution, expressed in a variety of organs, but most strongly in adult testis and ovary followed by small intestine, colon, prostate, thymus, spleen, pancreas, skeletal muscle, heart, brain and kidney. Also expressed in umbilical vein endothelial cells, foreskin fibroblast and Hep-G2 cells.

The protein localises to the nucleus. In terms of biological role, transcriptional repressor. The chain is Zinc finger protein 174 (ZNF174) from Homo sapiens (Human).